The following is a 160-amino-acid chain: uncharacterized protein (160 aa).

It localises to the plastid. This is an uncharacterized protein from Euglena longa (Euglenophycean alga).